The sequence spans 489 residues: MSRRNFKVLYVSGEVSPFVRISPLADFMASFPQAIEEEGFEARIMMPKYGTINDRKFRLHDVLRLSDIEVDLKEKVDLLNVKVTALPSSKIQTYFLYNEKYFKRNGLFTDIHNGSDLKGSTDKVVFFNVGVLETLQRLGWKPDIIHCHDWHAALIPLLLKTVYASHEFFRDIKTVFTIHNIYRQGILPMKAFQKLLPEEVSSALHCSNDEVNMLYTGVEHADLLTTTSKVYAEEIVHDGLQTYGLGRVLEEHQAKFYGILNGIDSRQWNSAADKLIKKRYSLEHMDGKLDNKKALLEEAGLPYTEGTPVVGVILNFDEFQGAELLQQSLEQLAALDIQLIISGSGDKKYEKVFQDFALEHPEQVSVHGEYSDSFFHLAIAGLDILLMPGMIESCGMIQMFAMNYGTIPVAYAGGGIVETIEERDEESGSGFIFHDYSAESLVGKLEEALACFHDEESWQQIVMTAMTRDFTWKKSAEEYDQLYRELLEP.

Position 20 (arginine 20) interacts with ADP-alpha-D-glucose.

Belongs to the glycosyltransferase 1 family. Bacterial/plant glycogen synthase subfamily.

It catalyses the reaction [(1-&gt;4)-alpha-D-glucosyl](n) + ADP-alpha-D-glucose = [(1-&gt;4)-alpha-D-glucosyl](n+1) + ADP + H(+). Its pathway is glycan biosynthesis; glycogen biosynthesis. Its function is as follows. Synthesizes alpha-1,4-glucan chains using ADP-glucose. The sequence is that of Glycogen synthase from Pelodictyon phaeoclathratiforme (strain DSM 5477 / BU-1).